The primary structure comprises 602 residues: Glutamine--fructose-6-phosphate aminotransferase [isomerizing] (602 aa).

C2 (nucleophile; for GATase activity) is an active-site residue. The region spanning 2 to 217 is the Glutamine amidotransferase type-2 domain; that stretch reads CGIVGVVGNT…DQELVIVKAD (216 aa). The interval 67–87 is disordered; sequence IGHTRWATHGKPTEDNAHPHR. Residues 77–87 show a composition bias toward basic and acidic residues; it reads KPTEDNAHPHR. 2 consecutive SIS domains span residues 283–422 and 455–592; these read IIKA…ANGN and VREL…VDKP. K597 acts as the For Fru-6P isomerization activity in catalysis.

Homodimer.

The protein localises to the cytoplasm. It carries out the reaction D-fructose 6-phosphate + L-glutamine = D-glucosamine 6-phosphate + L-glutamate. In terms of biological role, catalyzes the first step in hexosamine metabolism, converting fructose-6P into glucosamine-6P using glutamine as a nitrogen source. The chain is Glutamine--fructose-6-phosphate aminotransferase [isomerizing] from Streptococcus pneumoniae serotype 4 (strain ATCC BAA-334 / TIGR4).